Here is a 548-residue protein sequence, read N- to C-terminus: Thermolysin (548 aa).

An N-terminal signal peptide occupies residues 1–28; the sequence is MKMKMKLASFGLAAGLAAQVFLPYNALA. Positions 29–232 are cleaved as a propeptide — activation peptide; the sequence is STEHVTWNQQ…DAAKPGDVKS (204 aa). Residues aspartate 289, aspartate 291, glutamine 293, and aspartate 370 each contribute to the Ca(2+) site. Residue histidine 374 participates in Zn(2+) binding. The active site involves glutamate 375. Residues histidine 378 and glutamate 398 each contribute to the Zn(2+) site. Glutamate 409, asparagine 415, aspartate 417, glutamate 419, glutamate 422, tyrosine 425, threonine 426, isoleucine 429, and aspartate 432 together coordinate Ca(2+). Histidine 463 (proton donor) is an active-site residue.

Belongs to the peptidase M4 family. Ca(2+) is required as a cofactor. It depends on Zn(2+) as a cofactor.

The protein localises to the secreted. The catalysed reaction is Preferential cleavage: Xaa-|-Leu &gt; Xaa-|-Phe.. Its function is as follows. Extracellular zinc metalloprotease. The protein is Thermolysin (npr) of Bacillus thermoproteolyticus.